Reading from the N-terminus, the 290-residue chain is 4-hydroxy-tetrahydrodipicolinate synthase (290 aa).

Thr46 lines the pyruvate pocket. Tyr134 acts as the Proton donor/acceptor in catalysis. Residue Lys163 is the Schiff-base intermediate with substrate of the active site. Residue Val205 participates in pyruvate binding.

The protein belongs to the DapA family. In terms of assembly, homotetramer; dimer of dimers.

The protein localises to the cytoplasm. It catalyses the reaction L-aspartate 4-semialdehyde + pyruvate = (2S,4S)-4-hydroxy-2,3,4,5-tetrahydrodipicolinate + H2O + H(+). Its pathway is amino-acid biosynthesis; L-lysine biosynthesis via DAP pathway; (S)-tetrahydrodipicolinate from L-aspartate: step 3/4. Catalyzes the condensation of (S)-aspartate-beta-semialdehyde [(S)-ASA] and pyruvate to 4-hydroxy-tetrahydrodipicolinate (HTPA). In Bacillus subtilis (strain 168), this protein is 4-hydroxy-tetrahydrodipicolinate synthase.